The primary structure comprises 81 residues: Sulfur carrier protein TusA (81 aa).

Residue cysteine 19 is the Cysteine persulfide intermediate of the active site.

This sequence belongs to the sulfur carrier protein TusA family. As to quaternary structure, interacts with IscS.

Its subcellular location is the cytoplasm. It functions in the pathway tRNA modification. Its function is as follows. Sulfur carrier protein involved in sulfur trafficking in the cell. Part of a sulfur-relay system required for 2-thiolation during synthesis of 2-thiouridine of the modified wobble base 5-methylaminomethyl-2-thiouridine (mnm(5)s(2)U) in tRNA. Interacts with IscS and stimulates its cysteine desulfurase activity. Accepts an activated sulfur from IscS, which is then transferred to TusD, and thus determines the direction of sulfur flow from IscS to 2-thiouridine formation. Also appears to be involved in sulfur transfer for the biosynthesis of molybdopterin. This is Sulfur carrier protein TusA from Cronobacter sakazakii (strain ATCC BAA-894) (Enterobacter sakazakii).